The following is a 65-amino-acid chain: Protein translocase subunit SecE (65 aa).

Residues 44–64 (LVMAVVGLIAYIVQLTTSLII) traverse the membrane as a helical segment.

Belongs to the SecE/SEC61-gamma family. As to quaternary structure, component of the Sec protein translocase complex. Heterotrimer consisting of SecY (alpha), SecG (beta) and SecE (gamma) subunits. The heterotrimers can form oligomers, although 1 heterotrimer is thought to be able to translocate proteins. Interacts with the ribosome. May interact with SecDF, and other proteins may be involved.

Its subcellular location is the cell membrane. Essential subunit of the Sec protein translocation channel SecYEG. Clamps together the 2 halves of SecY. May contact the channel plug during translocation. This chain is Protein translocase subunit SecE, found in Sulfolobus acidocaldarius (strain ATCC 33909 / DSM 639 / JCM 8929 / NBRC 15157 / NCIMB 11770).